Here is an 84-residue protein sequence, read N- to C-terminus: uncharacterized protein (84 aa).

The segment at 8 to 47 is cysteine motif; it reads CECCDRDLPPDSGDAMICTFECTFCAGCAETKLGGTCPNC.

This is an uncharacterized protein from Rhizobium meliloti (strain 1021) (Ensifer meliloti).